The following is a 486-amino-acid chain: Ribulose bisphosphate carboxylase large chain (486 aa).

Residues N125 and T175 each contribute to the substrate site. K177 serves as the catalytic Proton acceptor. K179 contributes to the substrate binding site. K203, D205, and E206 together coordinate Mg(2+). Position 203 is an N6-carboxylysine (K203). H295 (proton acceptor) is an active-site residue. Substrate-binding residues include R296, H328, and S380.

The protein belongs to the RuBisCO large chain family. Type I subfamily. Heterohexadecamer of 8 large chains and 8 small chains. Mg(2+) is required as a cofactor.

The catalysed reaction is 2 (2R)-3-phosphoglycerate + 2 H(+) = D-ribulose 1,5-bisphosphate + CO2 + H2O. It carries out the reaction D-ribulose 1,5-bisphosphate + O2 = 2-phosphoglycolate + (2R)-3-phosphoglycerate + 2 H(+). RuBisCO catalyzes two reactions: the carboxylation of D-ribulose 1,5-bisphosphate, the primary event in carbon dioxide fixation, as well as the oxidative fragmentation of the pentose substrate. Both reactions occur simultaneously and in competition at the same active site. The chain is Ribulose bisphosphate carboxylase large chain from Afipia carboxidovorans (strain ATCC 49405 / DSM 1227 / KCTC 32145 / OM5) (Oligotropha carboxidovorans).